Here is a 440-residue protein sequence, read N- to C-terminus: Xylose isomerase (440 aa).

Mg(2+)-binding residues include D307 and D309.

The protein belongs to the xylose isomerase family. As to quaternary structure, homotetramer. It depends on Mg(2+) as a cofactor.

It is found in the cytoplasm. It carries out the reaction alpha-D-xylose = alpha-D-xylulofuranose. The protein is Xylose isomerase of Pectobacterium carotovorum subsp. carotovorum (strain PC1).